A 264-amino-acid polypeptide reads, in one-letter code: Acetylglutamate kinase (264 aa).

Residues 50–51 (GG), arginine 72, and asparagine 164 each bind substrate.

It belongs to the acetylglutamate kinase family. ArgB subfamily.

Its subcellular location is the cytoplasm. It catalyses the reaction N-acetyl-L-glutamate + ATP = N-acetyl-L-glutamyl 5-phosphate + ADP. It functions in the pathway amino-acid biosynthesis; L-arginine biosynthesis; N(2)-acetyl-L-ornithine from L-glutamate: step 2/4. Its function is as follows. Catalyzes the ATP-dependent phosphorylation of N-acetyl-L-glutamate. The protein is Acetylglutamate kinase of Moritella profunda.